A 506-amino-acid polypeptide reads, in one-letter code: MLWFQGAIPAAIASAKRSGAVFVVFVAGDDEQSTQMAASWEDEKVREASSDNFVAIKIDTKSEACLQFSQIYPVVCVPSSFFIGDSGIPLEVIAGSVSADELVTRIHKVQQMHSLKGETSVTNDKQSESSVSTPSASFEPDICESAESRNTELCETPTTSDPKSDTAAGGECAGHDSLSQEPPGCSNQRPAEDLTVRVERLTKKLEERREEKRKEEAQREIKKEIERRKTGKEMLDYKRKQEEELTKRMLEERSREKAEDRAARERIKQQIALDRAERAARFAKTKEAEAAKAAALLAKQAEAEVKRESSTRDRSTIARIQFRLPDGSSFTNQFPSDAPLEEARQFAAQTVGNTYGNFSLATMFPRREFTREDYKRKLLDLELAPSASVVLLPAGRPATSIVPSSSGDIWTLLGTVLYPFLAIWRLISNFLFSNPPPAQTSARATSTEPSNSASSSKSEKREPVRKRVLEKRGEDFKKEGKIYRLRTQDDGEDENNTWNGNSTQQM.

Residues 1–199 form an interaction with UBQLN1 region; that stretch reads MLWFQGAIPA…PAEDLTVRVE (199 aa). Residues 1–411 are Cytoplasmic-facing; it reads MLWFQGAIPA…VPSSSGDIWT (411 aa). Polar residues-rich tracts occupy residues 114–136 and 177–189; these read SLKG…TPSA and SLSQ…SNQR. Residues 114 to 193 are disordered; that stretch reads SLKGETSVTN…GCSNQRPAED (80 aa). The UBX domain occupies 313-391; that stretch reads DRSTIARIQF…ELAPSASVVL (79 aa). An intramembrane segment occupies 412-432; it reads LLGTVLYPFLAIWRLISNFLF. Topologically, residues 433 to 506 are cytoplasmic; the sequence is SNPPPAQTSA…TWNGNSTQQM (74 aa). The segment at 437-506 is disordered; that stretch reads PAQTSARATS…TWNGNSTQQM (70 aa). Positions 444–456 are enriched in low complexity; it reads ATSTEPSNSASSS. Basic and acidic residues predominate over residues 457-489; that stretch reads KSEKREPVRKRVLEKRGEDFKKEGKIYRLRTQD. Thr487 carries the post-translational modification Phosphothreonine. Polar residues predominate over residues 496 to 506; sequence NTWNGNSTQQM.

In terms of assembly, directly interacts with VCP. Interacts with UBQLN1. Forms a complex with VCP and UBQLN1.

It is found in the endoplasmic reticulum membrane. Its subcellular location is the nucleus envelope. Functionally, involved in endoplasmic reticulum-associated protein degradation (ERAD). Acts as a platform to recruit both UBQLN1 and VCP to the ER during ERAD. The chain is UBX domain-containing protein 4 (Ubxn4) from Rattus norvegicus (Rat).